The chain runs to 217 residues: Probable GTP-binding protein EngB (217 aa).

The 174-residue stretch at 44–217 (DRIEVCFAGR…TLRTIVATLG (174 aa)) folds into the EngB-type G domain. GTP-binding positions include 52 to 59 (GRSNVGKS), 79 to 83 (GRTQE), 97 to 100 (DLPG), 164 to 167 (TKAD), and 198 to 200 (TSS). Positions 59 and 81 each coordinate Mg(2+).

Belongs to the TRAFAC class TrmE-Era-EngA-EngB-Septin-like GTPase superfamily. EngB GTPase family. Mg(2+) serves as cofactor.

Necessary for normal cell division and for the maintenance of normal septation. This Cereibacter sphaeroides (strain ATCC 17023 / DSM 158 / JCM 6121 / CCUG 31486 / LMG 2827 / NBRC 12203 / NCIMB 8253 / ATH 2.4.1.) (Rhodobacter sphaeroides) protein is Probable GTP-binding protein EngB.